The chain runs to 236 residues: Small ribosomal subunit protein eS6 (236 aa).

It belongs to the eukaryotic ribosomal protein eS6 family. In terms of assembly, component of the small ribosomal subunit. Part of the small subunit (SSU) processome, composed of more than 70 proteins and the RNA chaperone small nucleolar RNA (snoRNA) U3. In terms of processing, ribosomal protein S6 is the major substrate of protein kinases in eukaryote ribosomes.

The protein localises to the cytoplasm. The protein resides in the nucleus. It is found in the nucleolus. Functionally, component of the 40S small ribosomal subunit. Plays an important role in controlling cell growth and proliferation through the selective translation of particular classes of mRNA. Part of the small subunit (SSU) processome, first precursor of the small eukaryotic ribosomal subunit. During the assembly of the SSU processome in the nucleolus, many ribosome biogenesis factors, an RNA chaperone and ribosomal proteins associate with the nascent pre-rRNA and work in concert to generate RNA folding, modifications, rearrangements and cleavage as well as targeted degradation of pre-ribosomal RNA by the RNA exosome. The chain is Small ribosomal subunit protein eS6 (rps6) from Dictyostelium discoideum (Social amoeba).